The chain runs to 144 residues: Large ribosomal subunit protein uL13 (144 aa).

Belongs to the universal ribosomal protein uL13 family. In terms of assembly, part of the 50S ribosomal subunit.

Functionally, this protein is one of the early assembly proteins of the 50S ribosomal subunit, although it is not seen to bind rRNA by itself. It is important during the early stages of 50S assembly. The chain is Large ribosomal subunit protein uL13 from Syntrophomonas wolfei subsp. wolfei (strain DSM 2245B / Goettingen).